The sequence spans 981 residues: Ubiquitin carboxyl-terminal hydrolase 15 (981 aa).

Ala2 carries the N-acetylalanine modification. Residues 2–223 (AEGGAADLDT…KNEDGTWPRG (222 aa)) form a mediates interaction with SART3 region. Positions 7–118 (ADLDTQRSDI…GQEPIARKVV (112 aa)) constitute a DUSP domain. The interval 216 to 237 (EDGTWPRGPSTPKSPGASNFST) is disordered. The residue at position 226 (Thr226) is a Phosphothreonine. Over residues 226–237 (TPKSPGASNFST) the composition is skewed to polar residues. Phosphoserine occurs at positions 229 and 242. The USP domain occupies 289-933 (CGLSNLGNTC…AAYVLFYQRQ (645 aa)). Residue Cys298 is the Nucleophile of the active site. Thr602 bears the Phosphothreonine mark. The segment at 629–694 (GSLHCCKDQN…GGDNDSENGL (66 aa)) is disordered. The segment covering 656–673 (METDEPDDESSQDQELPS) has biased composition (acidic residues). His891 functions as the Proton acceptor in the catalytic mechanism. A disordered region spans residues 952–981 (SAATGIPLESDEDSNDNDNDIENENCMHTN). A compositionally biased stretch (acidic residues) spans 960–974 (ESDEDSNDNDNDIEN). Ser961 and Ser965 each carry phosphoserine.

It belongs to the peptidase C19 family. In terms of assembly, a homodimer structure has been reported; however it is unclear whether the protein form a homodimer in vivo. Identified in a complex with the COP9 signalosome complex (CSN). Interacts with SMAD1, SMAD2 and SMAD3; the interaction is direct. Forms a complex with SMURF2 and SMAD7. Interacts with TGFBR1. Interacts with SART3; the interaction is direct. May interact with RNF20 and RNF40. May interact with PRKN. Interacts with INCA1. As to quaternary structure, (Microbial infection) Interacts with human papillomavirus type 16 protein E6. Post-translationally, phosphorylated. Phosphorylation protects against ubiquitination and subsequent degradation by the proteasome. In terms of processing, ubiquitinated, leading to degradation by the proteasome. In terms of tissue distribution, expressed in skeletal muscle, kidney, heart, placenta, liver, thymus, lung, and ovary, with little or no expression in other tissues.

It is found in the cytoplasm. It localises to the nucleus. Its subcellular location is the mitochondrion. It catalyses the reaction Thiol-dependent hydrolysis of ester, thioester, amide, peptide and isopeptide bonds formed by the C-terminal Gly of ubiquitin (a 76-residue protein attached to proteins as an intracellular targeting signal).. Its function is as follows. Hydrolase that removes conjugated ubiquitin from target proteins and regulates various pathways such as the TGF-beta receptor signaling, NF-kappa-B and RNF41/NRDP1-PRKN pathways. Acts as a key regulator of TGF-beta receptor signaling pathway, but the precise mechanism is still unclear: according to a report, acts by promoting deubiquitination of monoubiquitinated R-SMADs (SMAD1, SMAD2 and/or SMAD3), thereby alleviating inhibition of R-SMADs and promoting activation of TGF-beta target genes. According to another reports, regulates the TGF-beta receptor signaling pathway by mediating deubiquitination and stabilization of TGFBR1, leading to an enhanced TGF-beta signal. Able to mediate deubiquitination of monoubiquitinated substrates, 'Lys-27'-, 'Lys-48'- and 'Lys-63'-linked polyubiquitin chains. May also regulate gene expression and/or DNA repair through the deubiquitination of histone H2B. Acts as an inhibitor of mitophagy by counteracting the action of parkin (PRKN): hydrolyzes cleavage of 'Lys-48'- and 'Lys-63'-linked polyubiquitin chains attached by parkin on target proteins such as MFN2, thereby reducing parkin's ability to drive mitophagy. Acts as an associated component of COP9 signalosome complex (CSN) and regulates different pathways via this association: regulates NF-kappa-B by mediating deubiquitination of NFKBIA and deubiquitinates substrates bound to VCP. Involved in endosome organization by mediating deubiquitination of SQSTM1: ubiquitinated SQSTM1 forms a molecular bridge that restrains cognate vesicles in the perinuclear region and its deubiquitination releases target vesicles for fast transport into the cell periphery. Acts as a negative regulator of antifungal immunity by mediating 'Lys-27'-linked deubiquitination of CARD9, thereby inactivating CARD9. Functionally, (Microbial infection) Protects APC and human papillomavirus type 16 protein E6 against degradation via the ubiquitin proteasome pathway. The protein is Ubiquitin carboxyl-terminal hydrolase 15 of Homo sapiens (Human).